Consider the following 97-residue polypeptide: uncharacterized protein (97 aa).

The next 3 membrane-spanning stretches (helical) occupy residues 5 to 25, 27 to 47, and 77 to 97; these read TLVA…SLSV, MVFV…LICY, and IISI…VFIL.

The protein localises to the membrane. This is an uncharacterized protein from Saccharomyces cerevisiae (strain ATCC 204508 / S288c) (Baker's yeast).